Reading from the N-terminus, the 505-residue chain is Histidine--tRNA ligase (505 aa).

It belongs to the class-II aminoacyl-tRNA synthetase family. As to quaternary structure, homodimer.

The protein resides in the cytoplasm. It carries out the reaction tRNA(His) + L-histidine + ATP = L-histidyl-tRNA(His) + AMP + diphosphate + H(+). The protein is Histidine--tRNA ligase of Jannaschia sp. (strain CCS1).